A 276-amino-acid chain; its full sequence is Rhomboid protease GlpG (276 aa).

A run of 6 helical transmembrane segments spans residues 94 to 114, 142 to 162, 169 to 189, 192 to 212, 229 to 249, and 250 to 270; these read GPVT…MQIL, ALMH…WYLG, LGSG…GYVQ, FSGP…GYVW, LIIF…GMSM, and ANGA…VDSL. Ser201 functions as the Nucleophile in the catalytic mechanism. His254 is a catalytic residue.

Belongs to the peptidase S54 family.

The protein resides in the cell inner membrane. The enzyme catalyses Cleaves type-1 transmembrane domains using a catalytic dyad composed of serine and histidine that are contributed by different transmembrane domains.. Functionally, rhomboid-type serine protease that catalyzes intramembrane proteolysis. The chain is Rhomboid protease GlpG from Shigella flexneri serotype 5b (strain 8401).